The primary structure comprises 332 residues: Biotin synthase (332 aa).

Residues Trp-53–Ala-283 form the Radical SAM core domain. [4Fe-4S] cluster-binding residues include Cys-71, Cys-75, and Cys-78. [2Fe-2S] cluster contacts are provided by Cys-150, Cys-211, and Lys-281.

Belongs to the radical SAM superfamily. Biotin synthase family. Homodimer. Requires [4Fe-4S] cluster as cofactor. It depends on [2Fe-2S] cluster as a cofactor.

The catalysed reaction is (4R,5S)-dethiobiotin + (sulfur carrier)-SH + 2 reduced [2Fe-2S]-[ferredoxin] + 2 S-adenosyl-L-methionine = (sulfur carrier)-H + biotin + 2 5'-deoxyadenosine + 2 L-methionine + 2 oxidized [2Fe-2S]-[ferredoxin]. It participates in cofactor biosynthesis; biotin biosynthesis; biotin from 7,8-diaminononanoate: step 2/2. Its function is as follows. Catalyzes the conversion of dethiobiotin (DTB) to biotin by the insertion of a sulfur atom into dethiobiotin via a radical-based mechanism. This chain is Biotin synthase, found in Chlorobium phaeovibrioides (strain DSM 265 / 1930) (Prosthecochloris vibrioformis (strain DSM 265)).